A 368-amino-acid polypeptide reads, in one-letter code: Aminomethyltransferase (368 aa).

Belongs to the GcvT family. As to quaternary structure, the glycine cleavage system is composed of four proteins: P, T, L and H.

It carries out the reaction N(6)-[(R)-S(8)-aminomethyldihydrolipoyl]-L-lysyl-[protein] + (6S)-5,6,7,8-tetrahydrofolate = N(6)-[(R)-dihydrolipoyl]-L-lysyl-[protein] + (6R)-5,10-methylene-5,6,7,8-tetrahydrofolate + NH4(+). In terms of biological role, the glycine cleavage system catalyzes the degradation of glycine. The sequence is that of Aminomethyltransferase from Xylella fastidiosa (strain M12).